Reading from the N-terminus, the 919-residue chain is Eukaryotic translation initiation factor 3 subunit C (919 aa).

Residues 1-28 are disordered; that stretch reads MSRFFANGSDSESESSEEEVQAPNFNKA. A compositionally biased stretch (acidic residues) spans 11-20; that stretch reads SESESSEEEV. Residues Ser-34, Ser-165, and Ser-177 each carry the phosphoserine modification. Residues 154–275 are disordered; it reads LSRFRENPQE…EQKIKLRKRA (122 aa). Positions 162–171 are enriched in acidic residues; it reads QEESENEDEE. The segment covering 210–236 has biased composition (acidic residues); it reads ADDEDSDESIDWDPDTESETESSEDEN. Positions 241 to 269 are enriched in basic and acidic residues; the sequence is MRERFLKRSTEKDDKDDDKRKDKRKEQKI. In terms of domain architecture, PCI spans 640-816; the sequence is FHMHINLELL…ETVVMHRSEP (177 aa). Residues 848 to 919 are disordered; the sequence is FFQRGNMGNR…QQQVQTIDEE (72 aa). Over residues 883-894 the composition is skewed to basic residues; it reads QRNRNQRGHHKN. Over residues 895–919 the composition is skewed to low complexity; sequence QQNQNQQQQQQHQREQQQVQTIDEE.

Belongs to the eIF-3 subunit C family. Component of the eukaryotic translation initiation factor 3 (eIF-3) complex. The eIF-3 complex interacts with pix.

The protein localises to the cytoplasm. Its function is as follows. Component of the eukaryotic translation initiation factor 3 (eIF-3) complex, which is involved in protein synthesis of a specialized repertoire of mRNAs and, together with other initiation factors, stimulates binding of mRNA and methionyl-tRNAi to the 40S ribosome. The eIF-3 complex specifically targets and initiates translation of a subset of mRNAs involved in cell proliferation. The sequence is that of Eukaryotic translation initiation factor 3 subunit C from Drosophila willistoni (Fruit fly).